Consider the following 209-residue polypeptide: 8-oxoguanine DNA glycosylase/AP lyase (209 aa).

Catalysis depends on residues K131 and D149.

Belongs to the type-2 OGG1 family.

It catalyses the reaction 2'-deoxyribonucleotide-(2'-deoxyribose 5'-phosphate)-2'-deoxyribonucleotide-DNA = a 3'-end 2'-deoxyribonucleotide-(2,3-dehydro-2,3-deoxyribose 5'-phosphate)-DNA + a 5'-end 5'-phospho-2'-deoxyribonucleoside-DNA + H(+). Functionally, catalyzes the excision of an oxidatively damaged form of guanine (7,8-dihydro-8-oxoguanine = 8-oxoG) from DNA. Also cleaves the DNA backbone at apurinic/apyrimidinic sites (AP sites). This chain is 8-oxoguanine DNA glycosylase/AP lyase, found in Korarchaeum cryptofilum (strain OPF8).